The sequence spans 145 residues: Photosystem I reaction center subunit VI-2, chloroplastic (145 aa).

The N-terminal 50 residues, 1–50 (MASFATIAAVQPSAAVKGLGGSSLAGAKLFIKPSRQSFKTKSTRAGAVVA), are a transit peptide targeting the chloroplast. A helical transmembrane segment spans residues 102–118 (LLLKFLILGGGSLLTYV). A disordered region spans residues 126–145 (VLPIKRGPQEPPKLGPRGKL).

It belongs to the psaH family.

It is found in the plastid. The protein localises to the chloroplast thylakoid membrane. In terms of biological role, possible role could be the docking of the LHC I antenna complex to the core complex. The sequence is that of Photosystem I reaction center subunit VI-2, chloroplastic (PSAH2) from Arabidopsis thaliana (Mouse-ear cress).